The following is a 929-amino-acid chain: SED5-binding protein 3 (929 aa).

A Phosphoserine modification is found at serine 15. A compositionally biased stretch (polar residues) spans 18–28; sequence ESTVHTGGASS. Residues 18–52 form a disordered region; sequence ESTVHTGGASSKKSRRPHRAYHNFSSGTVPTLGNS. Over residues 29-38 the composition is skewed to basic residues; the sequence is KKSRRPHRAY. Positions 40-52 are enriched in polar residues; the sequence is NFSSGTVPTLGNS. The residue at position 72 (threonine 72) is a Phosphothreonine. Serine 83, serine 85, serine 94, serine 101, and serine 110 each carry phosphoserine. Residue threonine 216 is modified to Phosphothreonine. The segment at 220 to 244 is zinc finger-like; it reads CRRCRAYANPKFQFTYDSSVICNIC.

Belongs to the SEC23/SEC24 family. SEC24 subfamily. In terms of assembly, COPII is composed of at least five proteins: the SEC23/24 complex, the SEC13/31 complex and SAR1. Binds to SED5. Interacts with GHR1.

Its subcellular location is the cytoplasm. It is found in the golgi apparatus membrane. The protein resides in the endoplasmic reticulum membrane. Component of the COPII coat, that covers ER-derived vesicles involved in transport from the endoplasmic reticulum to the Golgi apparatus. COPII acts in the cytoplasm to promote the transport of secretory, plasma membrane, and vacuolar proteins from the endoplasmic reticulum to the Golgi complex. This is SED5-binding protein 3 (SFB3) from Saccharomyces cerevisiae (strain ATCC 204508 / S288c) (Baker's yeast).